The sequence spans 358 residues: Pre-mRNA-splicing factor spp2 (358 aa).

Disordered regions lie at residues 1–250 (MTDQ…RAVP) and 298–358 (AWNQ…RGDR). The segment covering 24–40 (KTKKPSRPTHTRRHHAR) has biased composition (basic residues). 2 stretches are compositionally biased toward basic and acidic residues: residues 80–137 (LENR…DASR) and 145–160 (RSRDRDHKPKDPKDLQ). Residues 174 to 185 (NPKSTTTATSSF) are compositionally biased toward polar residues. Composition is skewed to basic and acidic residues over residues 233-246 (SSHDRDRSPDHSDY) and 309-358 (GDSR…RGDR).

This sequence belongs to the SPP2 family. As to quaternary structure, associated with the spliceosome.

The protein localises to the nucleus. Involved in spliceosome maturation and the first step of pre-mRNA splicing. This chain is Pre-mRNA-splicing factor spp2 (msp-40), found in Neurospora crassa (strain ATCC 24698 / 74-OR23-1A / CBS 708.71 / DSM 1257 / FGSC 987).